The primary structure comprises 536 residues: Probable tyrosyl-DNA phosphodiesterase (536 aa).

His-122 (nucleophile) is an active-site residue. Residue Lys-124 participates in substrate binding. An interaction with DNA region spans residues 315–318; sequence SMGS. The active-site Proton donor/acceptor is His-401. Position 403 (Lys-403) interacts with substrate.

It belongs to the tyrosyl-DNA phosphodiesterase family.

The protein resides in the nucleus. Its function is as follows. DNA repair enzyme that can remove a variety of covalent adducts from DNA through hydrolysis of a 3'-phosphodiester bond, giving rise to DNA with a free 3' phosphate. Catalyzes the hydrolysis of dead-end complexes between DNA and the topoisomerase I active site tyrosine residue. Hydrolyzes 3'-phosphoglycolates on protruding 3' ends on DNA double-strand breaks due to DNA damage by radiation and free radicals. Acts on blunt-ended double-strand DNA breaks and on single-stranded DNA. May have low 3'exonuclease activity and may be able to remove a single nucleoside from the 3'end of DNA and RNA molecules with 3'hydroxyl groups. Has no exonuclease activity towards DNA or RNA with a 3'phosphate. This Schizosaccharomyces pombe (strain 972 / ATCC 24843) (Fission yeast) protein is Probable tyrosyl-DNA phosphodiesterase.